A 152-amino-acid polypeptide reads, in one-letter code: Protein NrdI (152 aa).

It belongs to the NrdI family.

Its function is as follows. Probably involved in ribonucleotide reductase function. The polypeptide is Protein NrdI (Mycobacterium sp. (strain JLS)).